The sequence spans 461 residues: Photosystem II CP43 reaction center protein (461 aa).

Helical transmembrane passes span 57–81 (LFEV…SHLA), 122–143 (LRGP…KDKN), 166–188 (KAMF…RIIS), 243–263 (KPFG…LSYS), and 279–300 (WYNN…ASQS). Glu-355 serves as a coordination point for [CaMn4O5] cluster. A helical membrane pass occupies residues 435-459 (RARAAAAGFEKGIDRATEPVLAMRD).

This sequence belongs to the PsbB/PsbC family. PsbC subfamily. As to quaternary structure, PSII is composed of 1 copy each of membrane proteins PsbA, PsbB, PsbC, PsbD, PsbE, PsbF, PsbH, PsbI, PsbJ, PsbK, PsbL, PsbM, PsbT, PsbX, PsbY, PsbZ, Psb30/Ycf12, peripheral proteins PsbO, CyanoQ (PsbQ), PsbU, PsbV and a large number of cofactors. It forms dimeric complexes. Requires Binds multiple chlorophylls and provides some of the ligands for the Ca-4Mn-5O cluster of the oxygen-evolving complex. It may also provide a ligand for a Cl- that is required for oxygen evolution. PSII binds additional chlorophylls, carotenoids and specific lipids. as cofactor.

It is found in the cellular thylakoid membrane. Its function is as follows. One of the components of the core complex of photosystem II (PSII). It binds chlorophyll and helps catalyze the primary light-induced photochemical processes of PSII. PSII is a light-driven water:plastoquinone oxidoreductase, using light energy to abstract electrons from H(2)O, generating O(2) and a proton gradient subsequently used for ATP formation. In Synechococcus elongatus (strain ATCC 33912 / PCC 7942 / FACHB-805) (Anacystis nidulans R2), this protein is Photosystem II CP43 reaction center protein.